We begin with the raw amino-acid sequence, 156 residues long: Small ribosomal subunit protein uS7 (156 aa).

It belongs to the universal ribosomal protein uS7 family. Part of the 30S ribosomal subunit. Contacts proteins S9 and S11.

One of the primary rRNA binding proteins, it binds directly to 16S rRNA where it nucleates assembly of the head domain of the 30S subunit. Is located at the subunit interface close to the decoding center, probably blocks exit of the E-site tRNA. In Pectobacterium atrosepticum (strain SCRI 1043 / ATCC BAA-672) (Erwinia carotovora subsp. atroseptica), this protein is Small ribosomal subunit protein uS7.